Consider the following 438-residue polypeptide: Keratin, type I cytoskeletal 13 (438 aa).

Positions 1 to 95 are head; it reads MSCRFQSSSM…SVDGGLLSGN (95 aa). Residues R27 and R35 each carry the omega-N-methylarginine modification. The segment at 96-131 is coil; that stretch reads EKITMQNLNDRLASYLEKVRALEAANADLEVKIRDW. Residues 96-408 form the IF rod domain; it reads EKITMQNLND…SLLEGQDAKM (313 aa). The interval 132 to 150 is linker 1; that stretch reads HLKQSPTSPERDYSAYYKT. The coil 1B stretch occupies residues 151–242; it reads IEELRIKILE…KNHEEEMKEF (92 aa). Positions 243–265 are linker 12; that stretch reads SNQAVGQVNVEMDATPGIDLTRV. A coil 2 region spans residues 266–404; it reads LAEMREQYEA…ATYRSLLEGQ (139 aa). Residues 405–438 form a tail region; that stretch reads DAKMTGFNTGGNSTTTSNTSTSPSTSGRPDFRKY. The segment at 408-438 is disordered; that stretch reads MTGFNTGGNSTTTSNTSTSPSTSGRPDFRKY. The span at 409–431 shows a compositional bias: low complexity; that stretch reads TGFNTGGNSTTTSNTSTSPSTSG.

Belongs to the intermediate filament family. In terms of assembly, heterotetramer of two type I and two type II keratins. Post-translationally, O-glycosylated; glycans consist of single N-acetylglucosamine residues.

In terms of biological role, type 1 keratin. Maintains postnatal tongue mucosal cell homeostasis and tissue organization in response to mechanical stress, potentially via regulation of the G1/S phase cyclins CCNE1 and CCNE2. This chain is Keratin, type I cytoskeletal 13, found in Rattus norvegicus (Rat).